We begin with the raw amino-acid sequence, 95 residues long: MTFRPLHDRVLVKRVEEESTTKGGIIIPDTAKEKPQEGEVVAIGGGAIKEDGSVRPLDVKAGDRILFGKWSGTEVTVDGVELLIMKESDILGVMA.

Belongs to the GroES chaperonin family. Heptamer of 7 subunits arranged in a ring. Interacts with the chaperonin GroEL.

It is found in the cytoplasm. In terms of biological role, together with the chaperonin GroEL, plays an essential role in assisting protein folding. The GroEL-GroES system forms a nano-cage that allows encapsulation of the non-native substrate proteins and provides a physical environment optimized to promote and accelerate protein folding. GroES binds to the apical surface of the GroEL ring, thereby capping the opening of the GroEL channel. The sequence is that of Co-chaperonin GroES from Maricaulis maris (strain MCS10) (Caulobacter maris).